Here is a 161-residue protein sequence, read N- to C-terminus: AP-1 complex subunit sigma-1 (161 aa).

This sequence belongs to the adaptor complexes small subunit family. Adaptor protein complex 1 (AP-1) is a heterotetramer composed of two large adaptins (gamma-type subunit and beta-type subunit), a medium adaptin (mu-type subunit) and a small adaptin (sigma-type subunit). In terms of tissue distribution, expressed in seedlings, roots, stems, leaves, flowers and siliques (developing fruits and seeds).

The protein localises to the golgi apparatus. The protein resides in the cytoplasmic vesicle. It is found in the clathrin-coated vesicle membrane. Its function is as follows. Subunit of clathrin-associated adaptor protein complex 1 that plays a role in protein sorting at the trans-Golgi network and early endosomes (TGN/EE). The AP complexes mediate the recruitment of clathrin to membranes and the recognition of sorting signals within the cytosolic tails of transmembrane cargo molecules. The polypeptide is AP-1 complex subunit sigma-1 (AAP19-1) (Arabidopsis thaliana (Mouse-ear cress)).